Here is a 117-residue protein sequence, read N- to C-terminus: SGSCTLETCWEKMPSFREVGSRLMEQYKGSAKVTGGNDGGTLIPEDSTVKPPSELDLVYSMDSPDFCEPNPRTVHSARRGVGCNSTSMDVGGCDILCCGRGYVEETVIFQVNCRCRF.

Residue serine 1 is the site of O-palmitoleoyl serine; by PORCN attachment. Cysteine 83 and cysteine 98 are joined by a disulfide. The N-linked (GlcNAc...) asparagine glycan is linked to asparagine 84.

This sequence belongs to the Wnt family. In terms of processing, palmitoleoylation is required for efficient binding to frizzled receptors. Depalmitoleoylation leads to Wnt signaling pathway inhibition.

Its subcellular location is the secreted. It is found in the extracellular space. It localises to the extracellular matrix. Ligand for members of the frizzled family of seven transmembrane receptors. Probable developmental protein. May be a signaling molecule which affects the development of discrete regions of tissues. Is likely to signal over only few cell diameters. The chain is Protein Wnt-6 (WNT-6) from Evasterias troschelii (Mottled sea star).